The sequence spans 185 residues: Large ribosomal subunit protein uL5 (185 aa).

Belongs to the universal ribosomal protein uL5 family. In terms of assembly, part of the 50S ribosomal subunit; part of the 5S rRNA/L5/L18/L25 subcomplex. Contacts the 5S rRNA and the P site tRNA. Forms a bridge to the 30S subunit in the 70S ribosome.

In terms of biological role, this is one of the proteins that bind and probably mediate the attachment of the 5S RNA into the large ribosomal subunit, where it forms part of the central protuberance. In the 70S ribosome it contacts protein S13 of the 30S subunit (bridge B1b), connecting the 2 subunits; this bridge is implicated in subunit movement. Contacts the P site tRNA; the 5S rRNA and some of its associated proteins might help stabilize positioning of ribosome-bound tRNAs. The polypeptide is Large ribosomal subunit protein uL5 (Bartonella tribocorum (strain CIP 105476 / IBS 506)).